An 85-amino-acid chain; its full sequence is U4-theraphotoxin-Hhn1s (85 aa).

The first 22 residues, 1–22 (MKVTLIAILTCAAVLVLHTTAA), serve as a signal peptide directing secretion. A propeptide spanning residues 23–48 (EELEAESQLMEVGMPDTELAAVDEER) is cleaved from the precursor. Disulfide bonds link cysteine 52/cysteine 66, cysteine 56/cysteine 77, and cysteine 71/cysteine 82.

The protein belongs to the neurotoxin 12 (Hwtx-2) family. 02 (Hwtx-2) subfamily. Expressed by the venom gland.

The protein localises to the secreted. Postsynaptic neurotoxin. This Cyriopagopus hainanus (Chinese bird spider) protein is U4-theraphotoxin-Hhn1s.